The primary structure comprises 347 residues: Quinolinate synthase (347 aa).

The iminosuccinate site is built by His-47 and Ser-68. [4Fe-4S] cluster is bound at residue Cys-113. Iminosuccinate contacts are provided by residues 139–141 (YAN) and Ser-156. Cys-200 is a binding site for [4Fe-4S] cluster. Iminosuccinate-binding positions include 226–228 (HPE) and Thr-243. Cys-297 lines the [4Fe-4S] cluster pocket.

The protein belongs to the quinolinate synthase family. Type 1 subfamily. It depends on [4Fe-4S] cluster as a cofactor.

It localises to the cytoplasm. The catalysed reaction is iminosuccinate + dihydroxyacetone phosphate = quinolinate + phosphate + 2 H2O + H(+). It functions in the pathway cofactor biosynthesis; NAD(+) biosynthesis; quinolinate from iminoaspartate: step 1/1. In terms of biological role, catalyzes the condensation of iminoaspartate with dihydroxyacetone phosphate to form quinolinate. The polypeptide is Quinolinate synthase (Escherichia coli O45:K1 (strain S88 / ExPEC)).